A 229-amino-acid chain; its full sequence is Ribosome maturation factor RimM (229 aa).

A disordered region spans residues 1 to 21; sequence MAGHDSGNAKRGRSPSFGVFV. Residues 148–229 enclose the PRC barrel domain; sequence ADEFYWVDLI…RVVVDWEADY (82 aa).

It belongs to the RimM family. In terms of assembly, binds ribosomal protein uS19.

The protein localises to the cytoplasm. An accessory protein needed during the final step in the assembly of 30S ribosomal subunit, possibly for assembly of the head region. Essential for efficient processing of 16S rRNA. May be needed both before and after RbfA during the maturation of 16S rRNA. It has affinity for free ribosomal 30S subunits but not for 70S ribosomes. The polypeptide is Ribosome maturation factor RimM (Burkholderia pseudomallei (strain 1106a)).